Reading from the N-terminus, the 220-residue chain is GTP cyclohydrolase 1 (220 aa).

3 residues coordinate Zn(2+): Cys-109, His-112, and Cys-180.

It belongs to the GTP cyclohydrolase I family. Toroid-shaped homodecamer, composed of two pentamers of five dimers.

It catalyses the reaction GTP + H2O = 7,8-dihydroneopterin 3'-triphosphate + formate + H(+). It participates in cofactor biosynthesis; 7,8-dihydroneopterin triphosphate biosynthesis; 7,8-dihydroneopterin triphosphate from GTP: step 1/1. The chain is GTP cyclohydrolase 1 from Yersinia pseudotuberculosis serotype O:1b (strain IP 31758).